Reading from the N-terminus, the 115-residue chain is Large ribosomal subunit protein bL19 (115 aa).

Belongs to the bacterial ribosomal protein bL19 family.

Functionally, this protein is located at the 30S-50S ribosomal subunit interface and may play a role in the structure and function of the aminoacyl-tRNA binding site. The chain is Large ribosomal subunit protein bL19 from Leifsonia xyli subsp. xyli (strain CTCB07).